The following is a 449-amino-acid chain: Elongation factor 1-alpha 1 (449 aa).

Positions 5 to 230 (KFHINIVVIG…DQINEPKRPS (226 aa)) constitute a tr-type G domain. The G1 stretch occupies residues 14 to 21 (GHVDSGKS). Residue 14–21 (GHVDSGKS) participates in GTP binding. Lys-55 carries the post-translational modification N6,N6-dimethyllysine. Positions 70–74 (GITID) are G2. Position 79 is an N6,N6,N6-trimethyllysine (Lys-79). The interval 91–94 (DAPG) is G3. Residues 91–95 (DAPGH) and 153–156 (NKMD) contribute to the GTP site. Residues 153-156 (NKMD) are G4. At Lys-187 the chain carries N6,N6,N6-trimethyllysine. Positions 194–196 (SGF) are G5. Lys-261 carries the post-translational modification N6-methyllysine. N6,N6,N6-trimethyllysine is present on residues Lys-306 and Lys-396. Glycyl lysine isopeptide (Lys-Gly) (interchain with G-Cter in ubiquitin) cross-links involve residues Lys-438 and Lys-441.

Belongs to the TRAFAC class translation factor GTPase superfamily. Classic translation factor GTPase family. EF-Tu/EF-1A subfamily.

It is found in the cytoplasm. Its function is as follows. This protein promotes the GTP-dependent binding of aminoacyl-tRNA to the A-site of ribosomes during protein biosynthesis. The chain is Elongation factor 1-alpha 1 (A1) from Arabidopsis thaliana (Mouse-ear cress).